Consider the following 412-residue polypeptide: Multifunctional CCA protein (412 aa).

2 residues coordinate ATP: G8 and R11. CTP is bound by residues G8 and R11. Residues D21 and D23 each coordinate Mg(2+). Residues R91, R137, and R140 each coordinate ATP. CTP contacts are provided by R91, R137, and R140. Residues 226-327 (TGEHVLMVVE…VKVLERCDAL (102 aa)) form the HD domain.

This sequence belongs to the tRNA nucleotidyltransferase/poly(A) polymerase family. Bacterial CCA-adding enzyme type 1 subfamily. Monomer. Can also form homodimers and oligomers. It depends on Mg(2+) as a cofactor. Ni(2+) is required as a cofactor.

The enzyme catalyses a tRNA precursor + 2 CTP + ATP = a tRNA with a 3' CCA end + 3 diphosphate. The catalysed reaction is a tRNA with a 3' CCA end + 2 CTP + ATP = a tRNA with a 3' CCACCA end + 3 diphosphate. Functionally, catalyzes the addition and repair of the essential 3'-terminal CCA sequence in tRNAs without using a nucleic acid template. Adds these three nucleotides in the order of C, C, and A to the tRNA nucleotide-73, using CTP and ATP as substrates and producing inorganic pyrophosphate. tRNA 3'-terminal CCA addition is required both for tRNA processing and repair. Also involved in tRNA surveillance by mediating tandem CCA addition to generate a CCACCA at the 3' terminus of unstable tRNAs. While stable tRNAs receive only 3'-terminal CCA, unstable tRNAs are marked with CCACCA and rapidly degraded. This is Multifunctional CCA protein from Azoarcus sp. (strain BH72).